The primary structure comprises 358 residues: tRNA-specific 2-thiouridylase MnmA (358 aa).

Residues 6–13 (ALSGGVDS) and Met32 contribute to the ATP site. The Nucleophile role is filled by Cys103. A disulfide bridge connects residues Cys103 and Cys201. Residue Gly127 participates in ATP binding. The interaction with tRNA stretch occupies residues 151 to 153 (KDQ). The active-site Cysteine persulfide intermediate is the Cys201.

It belongs to the MnmA/TRMU family.

The protein localises to the cytoplasm. It catalyses the reaction S-sulfanyl-L-cysteinyl-[protein] + uridine(34) in tRNA + AH2 + ATP = 2-thiouridine(34) in tRNA + L-cysteinyl-[protein] + A + AMP + diphosphate + H(+). Functionally, catalyzes the 2-thiolation of uridine at the wobble position (U34) of tRNA, leading to the formation of s(2)U34. This Thermotoga neapolitana (strain ATCC 49049 / DSM 4359 / NBRC 107923 / NS-E) protein is tRNA-specific 2-thiouridylase MnmA.